The chain runs to 46 residues: Antimicrobial peptide eNAP-1 (46 aa).

Intrachain disulfides connect Cys4–Cys16 and Cys10–Cys26.

This sequence belongs to the granulin family.

It is found in the secreted. Has antimicrobial activity against Gram-negative and Gram-positive bacteria. This is Antimicrobial peptide eNAP-1 from Equus caballus (Horse).